Reading from the N-terminus, the 752-residue chain is Xanthine dehydrogenase molybdenum-binding subunit (752 aa).

Mo-molybdopterin contacts are provided by Gln206, Phe237, Arg350, and Ala516.

The protein belongs to the xanthine dehydrogenase family. In terms of assembly, heterotrimer of XdhA, XdhB and XdhC. Mo-molybdopterin serves as cofactor.

The catalysed reaction is xanthine + NAD(+) + H2O = urate + NADH + H(+). It catalyses the reaction hypoxanthine + NAD(+) + H2O = xanthine + NADH + H(+). Its pathway is purine metabolism; hypoxanthine degradation; urate from hypoxanthine: step 1/2. It participates in purine metabolism; hypoxanthine degradation; urate from hypoxanthine: step 2/2. Its function is as follows. Presumed to be a dehydrogenase, but possibly an oxidase. Participates in limited purine salvage (requires aspartate) but does not support aerobic growth on purines as the sole carbon source (purine catabolism). This chain is Xanthine dehydrogenase molybdenum-binding subunit (xdhA), found in Escherichia coli O157:H7.